Reading from the N-terminus, the 331-residue chain is Fructose-1,6-bisphosphatase class 1 (331 aa).

The Mg(2+) site is built by E80, D98, L100, and D101. Residues 101-104 (DGSS) and N189 contribute to the substrate site. Residue E261 participates in Mg(2+) binding.

It belongs to the FBPase class 1 family. Homotetramer. Requires Mg(2+) as cofactor.

It is found in the cytoplasm. It catalyses the reaction beta-D-fructose 1,6-bisphosphate + H2O = beta-D-fructose 6-phosphate + phosphate. Its pathway is carbohydrate biosynthesis; gluconeogenesis. This is Fructose-1,6-bisphosphatase class 1 from Rhodobacter capsulatus (strain ATCC BAA-309 / NBRC 16581 / SB1003).